Here is a 147-residue protein sequence, read N- to C-terminus: Hemoglobin anodic subunit beta (147 aa).

The Globin domain maps to 2–147 (EWTDGERTAI…VTSALARQYH (146 aa)). 2 residues coordinate heme b: His63 and His92.

Belongs to the globin family. In terms of assembly, heterotetramer of two alpha chains and two beta chains. As to expression, red blood cells.

Functionally, involved in oxygen transport from gills to the various peripheral tissues. The protein is Hemoglobin anodic subunit beta of Gymnothorax unicolor (Brown moray).